Here is a 433-residue protein sequence, read N- to C-terminus: Probable exopolygalacturonase X (433 aa).

The N-terminal stretch at 1 to 21 (MKLTQATTLLLSLGLSLPVEG) is a signal peptide. The segment at 30-54 (VGPKPPFRPLPASTPRNKTCQVQSN) is disordered. Positions 43–54 (TPRNKTCQVQSN) are enriched in polar residues. N-linked (GlcNAc...) asparagine glycans are attached at residues asparagine 46, asparagine 127, and asparagine 197. The PbH1 1 repeat unit spans residues 229–250 (SSNIVIQNSVINNGDDCVSFKP). The active-site Proton donor is the aspartate 243. Cysteine 245 and cysteine 262 are oxidised to a cystine. 2 N-linked (GlcNAc...) asparagine glycosylation sites follow: asparagine 251 and asparagine 263. One copy of the PbH1 2 repeat lies at 252-272 (STEILVQNLHCNGSHGISVGS). Histidine 266 is a catalytic residue. N-linked (GlcNAc...) asparagine glycans are attached at residues asparagine 290, asparagine 295, asparagine 327, asparagine 352, and asparagine 362. Residues 325-346 (VQNITYDKMYIENVDWAIEVTQ) form a PbH1 3 repeat. One copy of the PbH1 4 repeat lies at 360–403 (PSNLTISDVYFNDLTGVTSGKNDPNVGTIICSSPDVCSGIHATN). Cysteine 390 and cysteine 396 form a disulfide bridge.

It belongs to the glycosyl hydrolase 28 family.

Its subcellular location is the secreted. The enzyme catalyses [(1-&gt;4)-alpha-D-galacturonosyl](n) + H2O = alpha-D-galacturonate + [(1-&gt;4)-alpha-D-galacturonosyl](n-1). Specific in hydrolyzing the terminal glycosidic bond of polygalacturonic acid and oligogalacturonates. The polypeptide is Probable exopolygalacturonase X (pgaX) (Aspergillus flavus (strain ATCC 200026 / FGSC A1120 / IAM 13836 / NRRL 3357 / JCM 12722 / SRRC 167)).